Here is a 350-residue protein sequence, read N- to C-terminus: Quinone oxidoreductase-like protein 2 (350 aa).

Lysine 36 is modified (N6-acetyllysine). Lysine 201 is modified (N6-succinyllysine). 2 positions are modified to N6-acetyllysine: lysine 302 and lysine 328.

It belongs to the zinc-containing alcohol dehydrogenase family. Quinone oxidoreductase subfamily.

This Mus musculus (Mouse) protein is Quinone oxidoreductase-like protein 2.